Consider the following 364-residue polypeptide: Aminomethyltransferase (364 aa).

Belongs to the GcvT family. In terms of assembly, the glycine cleavage system is composed of four proteins: P, T, L and H.

It carries out the reaction N(6)-[(R)-S(8)-aminomethyldihydrolipoyl]-L-lysyl-[protein] + (6S)-5,6,7,8-tetrahydrofolate = N(6)-[(R)-dihydrolipoyl]-L-lysyl-[protein] + (6R)-5,10-methylene-5,6,7,8-tetrahydrofolate + NH4(+). In terms of biological role, the glycine cleavage system catalyzes the degradation of glycine. The protein is Aminomethyltransferase of Shewanella oneidensis (strain ATCC 700550 / JCM 31522 / CIP 106686 / LMG 19005 / NCIMB 14063 / MR-1).